A 573-amino-acid polypeptide reads, in one-letter code: Chromosomal replication initiator protein DnaA (573 aa).

The segment at 1–85 (MSQNSSSLLE…TKVLSMRMGR (85 aa)) is domain I, interacts with DnaA modulators. The domain II stretch occupies residues 85-231 (RSFSLAVSVE…TPAHNPNREV (147 aa)). The interval 91-232 (VSVEPSRDGE…PAHNPNREVS (142 aa)) is disordered. Positions 116 to 169 (PYPGQGPQSPQGQQGQQGQHPVQQEVRAHAPAPHQQGQHQAAQHQPPANQAPGQ) are enriched in low complexity. Over residues 178-191 (QASQSAGAWEQTHS) the composition is skewed to polar residues. Residues 202–213 (SPAPVEPPPQPA) show a composition bias toward pro residues. Residues 232–448 (SLNPKYTFEN…GALIRVSAYS (217 aa)) are domain III, AAA+ region. ATP-binding residues include G276, G278, K279, and T280. Positions 449–573 (SLINQPIDKE…TQLIKSRGRN (125 aa)) are domain IV, binds dsDNA.

Belongs to the DnaA family. In terms of assembly, oligomerizes as a right-handed, spiral filament on DNA at oriC.

Its subcellular location is the cytoplasm. Its function is as follows. Plays an essential role in the initiation and regulation of chromosomal replication. ATP-DnaA binds to the origin of replication (oriC) to initiate formation of the DNA replication initiation complex once per cell cycle. Binds the DnaA box (a 9 base pair repeat at the origin) and separates the double-stranded (ds)DNA. Forms a right-handed helical filament on oriC DNA; dsDNA binds to the exterior of the filament while single-stranded (ss)DNA is stabiized in the filament's interior. The ATP-DnaA-oriC complex binds and stabilizes one strand of the AT-rich DNA unwinding element (DUE), permitting loading of DNA polymerase. After initiation quickly degrades to an ADP-DnaA complex that is not apt for DNA replication. Binds acidic phospholipids. This chain is Chromosomal replication initiator protein DnaA, found in Corynebacterium efficiens (strain DSM 44549 / YS-314 / AJ 12310 / JCM 11189 / NBRC 100395).